A 394-amino-acid polypeptide reads, in one-letter code: MRKGLASRVSHLKPSPTLTITAKAKELRAKGVDVIGFGAGEPDFDTPDFIKEACIRALREGKTKYAPSAGIPELREAIAEKLLKENKVEYKPSEIVVSAGAKMVLFLIFMAILDEGDEVLLPSPYWVTYPEQIRFFGGVPVEVPLKKEKGFQLSLEDVKEKVTERTKAIVINSPNNPTGAVYEEEELKKIAEFCVERGIFIISDECYEYFVYGDAKFVSPASFSDEVKNITFTVNAFSKSYSMTGWRIGYVACPEEYAKVIASLNSQSVSNVTTFAQYGALEALKNPKSKDFVNEMRNAFERRRDTAVEELSKIPGMDVVKPEGAFYIFPDFSAYAEKLGGDVKLSEFLLEKAKVAVVPGSAFGAPGFLRLSYALSEERLVEGIRRIKKALEEI.

Positions 40, 126, and 176 each coordinate L-aspartate. The residue at position 239 (Lys239) is an N6-(pyridoxal phosphate)lysine. Position 370 (Arg370) interacts with L-aspartate.

Belongs to the class-I pyridoxal-phosphate-dependent aminotransferase family. Homodimer. Pyridoxal 5'-phosphate serves as cofactor.

The protein resides in the cytoplasm. The enzyme catalyses L-aspartate + 2-oxoglutarate = oxaloacetate + L-glutamate. It catalyses the reaction L-arogenate + oxaloacetate = prephenate + L-aspartate. In terms of biological role, catalyzes the reversible conversion of aspartate and 2-oxoglutarate to glutamate and oxaloacetate. Can also transaminate prephenate in the presence of aspartate. The protein is Probable aspartate/prephenate aminotransferase (aspC) of Aquifex aeolicus (strain VF5).